Here is a 448-residue protein sequence, read N- to C-terminus: Squalene synthase ERG9 (448 aa).

Residues 428-448 (CNVVLFGIGALILSLIYFVLY) form a helical membrane-spanning segment.

The protein belongs to the phytoene/squalene synthase family. Requires Mg(2+) as cofactor.

It is found in the endoplasmic reticulum membrane. The protein localises to the microsome. It catalyses the reaction 2 (2E,6E)-farnesyl diphosphate + NADPH + H(+) = squalene + 2 diphosphate + NADP(+). The enzyme catalyses 2 (2E,6E)-farnesyl diphosphate + NADH + H(+) = squalene + 2 diphosphate + NAD(+). It participates in terpene metabolism; lanosterol biosynthesis; lanosterol from farnesyl diphosphate: step 1/3. Squalene synthase; part of the third module of ergosterol biosynthesis pathway that includes the late steps of the pathway. ERG9 produces squalene from 2 farnesyl pyrophosphate moieties. The third module or late pathway involves the ergosterol synthesis itself through consecutive reactions that mainly occur in the endoplasmic reticulum (ER) membrane. Firstly, the squalene synthase ERG9 catalyzes the condensation of 2 farnesyl pyrophosphate moieties to form squalene, which is the precursor of all steroids. Squalene synthase is crucial for balancing the incorporation of farnesyl diphosphate (FPP) into sterol and nonsterol isoprene synthesis. Secondly, the squalene epoxidase ERG1 catalyzes the stereospecific oxidation of squalene to (S)-2,3-epoxysqualene, which is considered to be a rate-limiting enzyme in steroid biosynthesis. Then, the lanosterol synthase ERG7 catalyzes the cyclization of (S)-2,3 oxidosqualene to lanosterol, a reaction that forms the sterol core. In the next steps, lanosterol is transformed to zymosterol through a complex process involving various demethylation, reduction and desaturation reactions. The lanosterol 14-alpha-demethylase ERG11 (also known as CYP51) catalyzes C14-demethylation of lanosterol to produce 4,4'-dimethyl cholesta-8,14,24-triene-3-beta-ol, which is critical for ergosterol biosynthesis. The C-14 reductase ERG24 reduces the C14=C15 double bond of 4,4-dimethyl-cholesta-8,14,24-trienol to produce 4,4-dimethyl-cholesta-8,24-dienol. 4,4-dimethyl-cholesta-8,24-dienol is substrate of the C-4 demethylation complex ERG25-ERG26-ERG27 in which ERG25 catalyzes the three-step monooxygenation required for the demethylation of 4,4-dimethyl and 4alpha-methylsterols, ERG26 catalyzes the oxidative decarboxylation that results in a reduction of the 3-beta-hydroxy group at the C-3 carbon to an oxo group, and ERG27 is responsible for the reduction of the keto group on the C-3. ERG28 has a role as a scaffold to help anchor ERG25, ERG26 and ERG27 to the endoplasmic reticulum and ERG29 regulates the activity of the iron-containing C4-methylsterol oxidase ERG25. Then, the sterol 24-C-methyltransferase ERG6 catalyzes the methyl transfer from S-adenosyl-methionine to the C-24 of zymosterol to form fecosterol. The C-8 sterol isomerase ERG2 catalyzes the reaction which results in unsaturation at C-7 in the B ring of sterols and thus converts fecosterol to episterol. The sterol-C5-desaturase ERG3 then catalyzes the introduction of a C-5 double bond in the B ring to produce 5-dehydroepisterol. The C-22 sterol desaturase ERG5 further converts 5-dehydroepisterol into ergosta-5,7,22,24(28)-tetraen-3beta-ol by forming the C-22(23) double bond in the sterol side chain. Finally, ergosta-5,7,22,24(28)-tetraen-3beta-ol is substrate of the C-24(28) sterol reductase ERG4 to produce ergosterol. The polypeptide is Squalene synthase ERG9 (Candida albicans (strain SC5314 / ATCC MYA-2876) (Yeast)).